Reading from the N-terminus, the 428-residue chain is Putative zinc metalloprotease SA1105 (428 aa).

H21 contacts Zn(2+). Residue E22 is part of the active site. H25 is a binding site for Zn(2+). The next 4 membrane-spanning stretches (helical) occupy residues 172–194 (FLTL…IGLA), 309–331 (GSTL…GFSF), 352–374 (IISL…LIPI), and 401–420 (TTII…LVTW). Residues 186-269 (ALVLFIGLAY…TKSVELTPKK (84 aa)) enclose the PDZ domain.

The protein belongs to the peptidase M50B family. Zn(2+) serves as cofactor.

Its subcellular location is the cell membrane. This is Putative zinc metalloprotease SA1105 from Staphylococcus aureus (strain N315).